The primary structure comprises 155 residues: Cyclic pyranopterin monophosphate synthase (155 aa).

Residues 75–77 (LCH) and 111–112 (ME) contribute to the substrate site. Asp-126 is an active-site residue.

It belongs to the MoaC family. In terms of assembly, homohexamer; trimer of dimers.

The catalysed reaction is (8S)-3',8-cyclo-7,8-dihydroguanosine 5'-triphosphate = cyclic pyranopterin phosphate + diphosphate. It functions in the pathway cofactor biosynthesis; molybdopterin biosynthesis. In terms of biological role, catalyzes the conversion of (8S)-3',8-cyclo-7,8-dihydroguanosine 5'-triphosphate to cyclic pyranopterin monophosphate (cPMP). The polypeptide is Cyclic pyranopterin monophosphate synthase (Corynebacterium efficiens (strain DSM 44549 / YS-314 / AJ 12310 / JCM 11189 / NBRC 100395)).